The following is a 71-amino-acid chain: Putative membrane protein insertion efficiency factor (71 aa).

It belongs to the UPF0161 family.

It localises to the cell membrane. Could be involved in insertion of integral membrane proteins into the membrane. This Acetivibrio thermocellus (strain ATCC 27405 / DSM 1237 / JCM 9322 / NBRC 103400 / NCIMB 10682 / NRRL B-4536 / VPI 7372) (Clostridium thermocellum) protein is Putative membrane protein insertion efficiency factor.